A 149-amino-acid chain; its full sequence is Large ribosomal subunit protein uL13 (149 aa).

The protein belongs to the universal ribosomal protein uL13 family. In terms of assembly, part of the 50S ribosomal subunit.

In terms of biological role, this protein is one of the early assembly proteins of the 50S ribosomal subunit, although it is not seen to bind rRNA by itself. It is important during the early stages of 50S assembly. This chain is Large ribosomal subunit protein uL13, found in Bifidobacterium adolescentis (strain ATCC 15703 / DSM 20083 / NCTC 11814 / E194a).